A 325-amino-acid polypeptide reads, in one-letter code: Tetraacyldisaccharide 4'-kinase (325 aa).

55–62 (TAGGNGKT) serves as a coordination point for ATP.

This sequence belongs to the LpxK family.

The catalysed reaction is a lipid A disaccharide + ATP = a lipid IVA + ADP + H(+). Its pathway is glycolipid biosynthesis; lipid IV(A) biosynthesis; lipid IV(A) from (3R)-3-hydroxytetradecanoyl-[acyl-carrier-protein] and UDP-N-acetyl-alpha-D-glucosamine: step 6/6. Its function is as follows. Transfers the gamma-phosphate of ATP to the 4'-position of a tetraacyldisaccharide 1-phosphate intermediate (termed DS-1-P) to form tetraacyldisaccharide 1,4'-bis-phosphate (lipid IVA). This chain is Tetraacyldisaccharide 4'-kinase, found in Salmonella agona (strain SL483).